A 327-amino-acid polypeptide reads, in one-letter code: S-adenosylmethionine/S-adenosylhomocysteine transporter (327 aa).

The next 10 membrane-spanning stretches (helical) occupy residues 22-42 (CDMAIFLIFLNAFIWSSSFAL), 53-73 (LFVTGSRMVLAGVVLFGLLLC), 85-105 (IMPIVLLSVIGFYLTNVLEFI), 114-134 (TACFIYGFSPFTAAFCSYVQL), 143-163 (LGGLSLGLVSYLVYLLFGGSE), 165-185 (VAEWGWQLGLPELLLIAATCL), 202-222 (SLSMTAINAYAMVIAGVLSLI), 240-260 (LFLQAIGALVIFSNLICYNLF), 271-291 (FLSFCNLVMPLFASFFGWLLL), and 294-314 (SFPPGLLFAVGFMVLGCRLIY). One can recognise an EamA 1 domain in the interval 34-157 (FIWSSSFALS…LGLVSYLVYL (124 aa)). The EamA 2 domain occupies 189–313 (GWTLLRKLGR…GFMVLGCRLI (125 aa)).

The protein belongs to the drug/metabolite transporter (DMT) superfamily. 10 TMS drug/metabolite exporter (DME) (TC 2.A.7.3) family.

It localises to the cell membrane. Functionally, transports S-adenosylmethionine (SAM) and S-adenosylhomocysteine (SAH). Allows bacteria to acquire SAM from the eukaryotic host cell and to likely remove the toxic by-product SAH. The protein is S-adenosylmethionine/S-adenosylhomocysteine transporter of Chlamydia trachomatis serovar D (strain ATCC VR-885 / DSM 19411 / UW-3/Cx).